The chain runs to 117 residues: MLSIILIASLILTIVTIVMFLASILSKKALIDREKSSPFECGFDPKSSSRLPFSLRFFLITIIFLIFDVEIALILPMIIIMKFSNIMIWTTTSIIFILILLIGLYHEWNQGMLNWSN.

A run of 3 helical transmembrane segments spans residues 4-24 (IILI…LASI), 60-80 (ITII…MIII), and 86-106 (IMIW…GLYH).

This sequence belongs to the complex I subunit 3 family.

It localises to the mitochondrion membrane. The enzyme catalyses a ubiquinone + NADH + 5 H(+)(in) = a ubiquinol + NAD(+) + 4 H(+)(out). Core subunit of the mitochondrial membrane respiratory chain NADH dehydrogenase (Complex I) that is believed to belong to the minimal assembly required for catalysis. Complex I functions in the transfer of electrons from NADH to the respiratory chain. The immediate electron acceptor for the enzyme is believed to be ubiquinone. In Drosophila subobscura (Fruit fly), this protein is NADH-ubiquinone oxidoreductase chain 3 (mt:ND3).